The sequence spans 547 residues: Chaperonin GroEL (547 aa).

Residues 30-33, lysine 51, 87-91, glycine 415, 479-481, and aspartate 495 each bind ATP; these read TLGP, DGTTT, and NAA.

Belongs to the chaperonin (HSP60) family. In terms of assembly, forms a cylinder of 14 subunits composed of two heptameric rings stacked back-to-back. Interacts with the co-chaperonin GroES.

It is found in the cytoplasm. It carries out the reaction ATP + H2O + a folded polypeptide = ADP + phosphate + an unfolded polypeptide.. Together with its co-chaperonin GroES, plays an essential role in assisting protein folding. The GroEL-GroES system forms a nano-cage that allows encapsulation of the non-native substrate proteins and provides a physical environment optimized to promote and accelerate protein folding. In Marinomonas sp. (strain MWYL1), this protein is Chaperonin GroEL.